The following is a 91-amino-acid chain: NADH-ubiquinone oxidoreductase chain 4L (91 aa).

Transmembrane regions (helical) follow at residues 8–28 (LYFI…MILL), 38–58 (LLML…VFLI), and 59–79 (SIVC…FFYG).

It belongs to the complex I subunit 4L family.

The protein localises to the mitochondrion membrane. It catalyses the reaction a ubiquinone + NADH + 5 H(+)(in) = a ubiquinol + NAD(+) + 4 H(+)(out). Core subunit of the mitochondrial membrane respiratory chain NADH dehydrogenase (Complex I) that is believed to belong to the minimal assembly required for catalysis. Complex I functions in the transfer of electrons from NADH to the respiratory chain. The immediate electron acceptor for the enzyme is believed to be ubiquinone. This Rhipicephalus sanguineus (Brown dog tick) protein is NADH-ubiquinone oxidoreductase chain 4L (ND4L).